Reading from the N-terminus, the 282-residue chain is Probable endonuclease 4 (282 aa).

9 residues coordinate Zn(2+): histidine 66, histidine 106, glutamate 143, aspartate 176, histidine 179, histidine 213, aspartate 226, histidine 228, and glutamate 258.

The protein belongs to the AP endonuclease 2 family. Zn(2+) serves as cofactor.

The enzyme catalyses Endonucleolytic cleavage to 5'-phosphooligonucleotide end-products.. Endonuclease IV plays a role in DNA repair. It cleaves phosphodiester bonds at apurinic or apyrimidinic (AP) sites, generating a 3'-hydroxyl group and a 5'-terminal sugar phosphate. This Aquifex aeolicus (strain VF5) protein is Probable endonuclease 4.